The sequence spans 81 residues: Delta-conotoxin PVIA (81 aa).

A signal peptide spans 1–22; it reads MKLTCVMIVAVLFLTAWTFVTA. Residues 23 to 49 constitute a propeptide that is removed on maturation; sequence DDSKNGLENHFWKARDEMKNREASKLD. 3 cysteine pairs are disulfide-bonded: Cys54–Cys69, Cys61–Cys73, and Cys68–Cys78. Residues Pro57 and Pro65 each carry the 4-hydroxyproline modification. Residue Gly80 is modified to Glycine amide; in form delta-conotoxin PVIA.

Post-translationally, the difference between delta-conotoxin PVIA and [deamido]-delta-conotoxin PVIA lies in the state of amidation of Gly-80. As to expression, expressed by the venom duct.

The protein localises to the secreted. Functionally, delta-conotoxins bind to site 6 of voltage-gated sodium channels (Nav) and inhibit the inactivation process. This toxin shows weak effects on rNav1.2/SCN2A (EC(50)=2.9 uM), rNav1.4/SCN4A (EC(50)=5.2 uM), hNav1.7/SCN9A (EC(50)=1.9 uM) and rNav1.7/SCN9A (EC(50)=6.4 uM). In vivo, this toxin shows different effects. In mice, injection of this toxin causes hyperactivity, rapid running, limb extension, and death. In fish, the peptide elicites spurts of rapid swimming, with twisted motions, quivering fins and the lockjaw extended mouth syndrome. Rigid paralysis and death are observed at higher doses. In mollusks, this peptide is inactive. Injection of this peptide together with the kappa-conotoxin PVIIA causes the sudden tetanus of prey (STOP) syndrome, which is a single, lethal 'fin-pop' in envenomed fish. The sequence is that of Delta-conotoxin PVIA from Conus purpurascens (Purple cone).